The chain runs to 231 residues: 2-C-methyl-D-erythritol 4-phosphate cytidylyltransferase (231 aa).

The protein belongs to the IspD/TarI cytidylyltransferase family. IspD subfamily.

The catalysed reaction is 2-C-methyl-D-erythritol 4-phosphate + CTP + H(+) = 4-CDP-2-C-methyl-D-erythritol + diphosphate. It functions in the pathway isoprenoid biosynthesis; isopentenyl diphosphate biosynthesis via DXP pathway; isopentenyl diphosphate from 1-deoxy-D-xylulose 5-phosphate: step 2/6. Catalyzes the formation of 4-diphosphocytidyl-2-C-methyl-D-erythritol from CTP and 2-C-methyl-D-erythritol 4-phosphate (MEP). The polypeptide is 2-C-methyl-D-erythritol 4-phosphate cytidylyltransferase (Shewanella pealeana (strain ATCC 700345 / ANG-SQ1)).